The following is a 177-amino-acid chain: MSELTTVARPYARAAFEFAVDSNKIEAWSEMLFFTAEVVNNPTMVKILTSDKTAQELAELFLNVCEDQLDENGQNFIKIMAENGRLRFLPRVAQLFAALEDEHKKQVDVNVVSAYGLSKKQLDELSKSLEKRLARKVNLHCSIDKTLIAGMVVTVGDLVIDSSAKGQLGRLSNTLQS.

It belongs to the ATPase delta chain family. As to quaternary structure, F-type ATPases have 2 components, F(1) - the catalytic core - and F(0) - the membrane proton channel. F(1) has five subunits: alpha(3), beta(3), gamma(1), delta(1), epsilon(1). F(0) has three main subunits: a(1), b(2) and c(10-14). The alpha and beta chains form an alternating ring which encloses part of the gamma chain. F(1) is attached to F(0) by a central stalk formed by the gamma and epsilon chains, while a peripheral stalk is formed by the delta and b chains.

The protein localises to the cell inner membrane. F(1)F(0) ATP synthase produces ATP from ADP in the presence of a proton or sodium gradient. F-type ATPases consist of two structural domains, F(1) containing the extramembraneous catalytic core and F(0) containing the membrane proton channel, linked together by a central stalk and a peripheral stalk. During catalysis, ATP synthesis in the catalytic domain of F(1) is coupled via a rotary mechanism of the central stalk subunits to proton translocation. In terms of biological role, this protein is part of the stalk that links CF(0) to CF(1). It either transmits conformational changes from CF(0) to CF(1) or is implicated in proton conduction. The polypeptide is ATP synthase subunit delta (Psychromonas ingrahamii (strain DSM 17664 / CCUG 51855 / 37)).